The sequence spans 140 residues: Early nodulin-like protein 22 (140 aa).

A signal peptide spans M1–L28. In terms of domain architecture, Phytocyanin spans T39 to A138. N85 is a glycosylation site (N-linked (GlcNAc...) asparagine). An intrachain disulfide couples C92 to C126.

It belongs to the early nodulin-like (ENODL) family.

Its function is as follows. May act as a carbohydrate transporter. The polypeptide is Early nodulin-like protein 22 (Arabidopsis thaliana (Mouse-ear cress)).